We begin with the raw amino-acid sequence, 120 residues long: Ribonuclease P protein component (120 aa).

The protein belongs to the RnpA family. In terms of assembly, consists of a catalytic RNA component (M1 or rnpB) and a protein subunit.

It catalyses the reaction Endonucleolytic cleavage of RNA, removing 5'-extranucleotides from tRNA precursor.. Its function is as follows. RNaseP catalyzes the removal of the 5'-leader sequence from pre-tRNA to produce the mature 5'-terminus. It can also cleave other RNA substrates such as 4.5S RNA. The protein component plays an auxiliary but essential role in vivo by binding to the 5'-leader sequence and broadening the substrate specificity of the ribozyme. The chain is Ribonuclease P protein component from Chelativorans sp. (strain BNC1).